The following is a 154-amino-acid chain: UPF0756 membrane protein RBAM_026200 (154 aa).

A run of 4 helical transmembrane segments spans residues A14–I34, W54–F74, W87–L107, and L117–I137.

The protein belongs to the UPF0756 family.

Its subcellular location is the cell membrane. In Bacillus velezensis (strain DSM 23117 / BGSC 10A6 / LMG 26770 / FZB42) (Bacillus amyloliquefaciens subsp. plantarum), this protein is UPF0756 membrane protein RBAM_026200.